Consider the following 370-residue polypeptide: UDP-N-acetylglucosamine--N-acetylmuramyl-(pentapeptide) pyrophosphoryl-undecaprenol N-acetylglucosamine transferase (370 aa).

Residues 15-17, N126, R169, S197, and Q299 contribute to the UDP-N-acetyl-alpha-D-glucosamine site; that span reads TGG.

Belongs to the glycosyltransferase 28 family. MurG subfamily.

The protein resides in the cell inner membrane. It carries out the reaction di-trans,octa-cis-undecaprenyl diphospho-N-acetyl-alpha-D-muramoyl-L-alanyl-D-glutamyl-meso-2,6-diaminopimeloyl-D-alanyl-D-alanine + UDP-N-acetyl-alpha-D-glucosamine = di-trans,octa-cis-undecaprenyl diphospho-[N-acetyl-alpha-D-glucosaminyl-(1-&gt;4)]-N-acetyl-alpha-D-muramoyl-L-alanyl-D-glutamyl-meso-2,6-diaminopimeloyl-D-alanyl-D-alanine + UDP + H(+). The protein operates within cell wall biogenesis; peptidoglycan biosynthesis. In terms of biological role, cell wall formation. Catalyzes the transfer of a GlcNAc subunit on undecaprenyl-pyrophosphoryl-MurNAc-pentapeptide (lipid intermediate I) to form undecaprenyl-pyrophosphoryl-MurNAc-(pentapeptide)GlcNAc (lipid intermediate II). This Methylorubrum populi (strain ATCC BAA-705 / NCIMB 13946 / BJ001) (Methylobacterium populi) protein is UDP-N-acetylglucosamine--N-acetylmuramyl-(pentapeptide) pyrophosphoryl-undecaprenol N-acetylglucosamine transferase.